The sequence spans 206 residues: 3-demethoxyubiquinol 3-hydroxylase (206 aa).

Fe cation-binding residues include Glu-55, Glu-85, His-88, Glu-137, Glu-169, and His-172.

Belongs to the COQ7 family. The cofactor is Fe cation.

It localises to the cell membrane. It carries out the reaction a 5-methoxy-2-methyl-3-(all-trans-polyprenyl)benzene-1,4-diol + AH2 + O2 = a 3-demethylubiquinol + A + H2O. It participates in cofactor biosynthesis; ubiquinone biosynthesis. Functionally, catalyzes the hydroxylation of 2-nonaprenyl-3-methyl-6-methoxy-1,4-benzoquinol during ubiquinone biosynthesis. In Azoarcus sp. (strain BH72), this protein is 3-demethoxyubiquinol 3-hydroxylase.